The sequence spans 85 residues: ATP synthase subunit c (85 aa).

2 helical membrane-spanning segments follow: residues 10-30 (IAVAIMIGLAALGTGIGFAIL) and 53-73 (FIVAGLLDAISMIAVGVALFF).

Belongs to the ATPase C chain family. F-type ATPases have 2 components, F(1) - the catalytic core - and F(0) - the membrane proton channel. F(1) has five subunits: alpha(3), beta(3), gamma(1), delta(1), epsilon(1). F(0) has three main subunits: a(1), b(2) and c(10-14). The alpha and beta chains form an alternating ring which encloses part of the gamma chain. F(1) is attached to F(0) by a central stalk formed by the gamma and epsilon chains, while a peripheral stalk is formed by the delta and b chains.

It is found in the cell inner membrane. Its function is as follows. F(1)F(0) ATP synthase produces ATP from ADP in the presence of a proton or sodium gradient. F-type ATPases consist of two structural domains, F(1) containing the extramembraneous catalytic core and F(0) containing the membrane proton channel, linked together by a central stalk and a peripheral stalk. During catalysis, ATP synthesis in the catalytic domain of F(1) is coupled via a rotary mechanism of the central stalk subunits to proton translocation. In terms of biological role, key component of the F(0) channel; it plays a direct role in translocation across the membrane. A homomeric c-ring of between 10-14 subunits forms the central stalk rotor element with the F(1) delta and epsilon subunits. The chain is ATP synthase subunit c from Shewanella halifaxensis (strain HAW-EB4).